Here is a 1919-residue protein sequence, read N- to C-terminus: Protein TIC 214 (1919 aa).

6 helical membrane passes run 18-38 (IINS…FSIG), 67-87 (FITG…HLAL), 90-110 (PHTI…WNNH), 127-147 (LSIQ…HFIL), 175-195 (VGWL…LVWI), and 224-244 (IFSI…PSPI). 3 disordered regions span residues 250–375 (KETP…GKEK), 1107–1129 (IKSI…NKRS), and 1606–1636 (ELKN…RRFV). 5 stretches are compositionally biased toward acidic residues: residues 259–269 (GESEEETDVEI), 278–288 (GESEEETDVEI), 297–307 (GESEEETDVEI), 316–328 (GESE…EIET), and 355–366 (EKEDPDKIDETE). Positions 1107–1117 (IKSITKEKKKG) are enriched in basic residues. Residues 1606-1623 (ELKNRNQEEKEPADRGDL) are compositionally biased toward basic and acidic residues. Residues 1626-1636 (DAQNQGNRRFV) are compositionally biased toward polar residues.

Belongs to the TIC214 family. In terms of assembly, part of the Tic complex.

The protein localises to the plastid. The protein resides in the chloroplast inner membrane. Functionally, involved in protein precursor import into chloroplasts. May be part of an intermediate translocation complex acting as a protein-conducting channel at the inner envelope. The chain is Protein TIC 214 from Panax ginseng (Korean ginseng).